A 417-amino-acid polypeptide reads, in one-letter code: Phosphoglycerate kinase (417 aa).

Residues V23, D24, F25, N26, Q39, R40, S63, H64, G66, R67, L122, R123, H170, and R171 each coordinate (2R)-3-phosphoglycerate. At S203 the chain carries Phosphoserine. G214 is an ADP binding site. G214 lines the CDP pocket. AMP contacts are provided by A215 and K216. A215 is an ATP binding site. A215 is a Mg(2+) binding site. D219 contacts CDP. D219 is a Mg(2+) binding site. Position 220 (K220) interacts with AMP. Residue K220 coordinates ATP. An ADP-binding site is contributed by G238. Residue G238 coordinates CDP. AMP-binding residues include A239 and G313. Residues A239 and G313 each contribute to the ATP site. Residues G338 and F343 each coordinate CDP. F343 is a binding site for ADP. E344 is a binding site for AMP. Positions 344, 375, and 376 each coordinate ATP. D375 contacts Mg(2+).

Belongs to the phosphoglycerate kinase family. As to quaternary structure, monomer. Mg(2+) serves as cofactor. Post-translationally, dephosphorylated by PTC1 and PTC2 at Ser-203; the protein is cytosolic when dephosphorylated.

Its subcellular location is the cytoplasm. It is found in the cytosol. The protein localises to the mitochondrion. The enzyme catalyses (2R)-3-phosphoglycerate + ATP = (2R)-3-phospho-glyceroyl phosphate + ADP. The protein operates within carbohydrate degradation; glycolysis; pyruvate from D-glyceraldehyde 3-phosphate: step 2/5. In terms of biological role, catalyzes one of the two ATP producing reactions in the glycolytic pathway via the reversible conversion of 1,3-diphosphoglycerate to 3-phosphoglycerate. Both L- and D- forms of purine and pyrimidine nucleotides can be used as substrates, but the activity is much lower on pyrimidines. Negatively regulates the biosynthesis of acetyl-CoA from pyruvate in the mitochondrion and consequently also attenuates aflatoxin production. This is Phosphoglycerate kinase from Aspergillus flavus (strain ATCC 200026 / FGSC A1120 / IAM 13836 / NRRL 3357 / JCM 12722 / SRRC 167).